The sequence spans 87 residues: Ribonuclease P protein component 1 (87 aa).

This sequence belongs to the eukaryotic/archaeal RNase P protein component 1 family. Consists of a catalytic RNA component and at least 4-5 protein subunits.

Its subcellular location is the cytoplasm. The catalysed reaction is Endonucleolytic cleavage of RNA, removing 5'-extranucleotides from tRNA precursor.. Its function is as follows. Part of ribonuclease P, a protein complex that generates mature tRNA molecules by cleaving their 5'-ends. The polypeptide is Ribonuclease P protein component 1 (Thermoplasma acidophilum (strain ATCC 25905 / DSM 1728 / JCM 9062 / NBRC 15155 / AMRC-C165)).